The sequence spans 252 residues: 2-succinyl-6-hydroxy-2,4-cyclohexadiene-1-carboxylate synthase (252 aa).

The protein belongs to the AB hydrolase superfamily. MenH family. Monomer.

The catalysed reaction is 5-enolpyruvoyl-6-hydroxy-2-succinyl-cyclohex-3-ene-1-carboxylate = (1R,6R)-6-hydroxy-2-succinyl-cyclohexa-2,4-diene-1-carboxylate + pyruvate. It participates in quinol/quinone metabolism; 1,4-dihydroxy-2-naphthoate biosynthesis; 1,4-dihydroxy-2-naphthoate from chorismate: step 3/7. The protein operates within quinol/quinone metabolism; menaquinone biosynthesis. Its function is as follows. Catalyzes a proton abstraction reaction that results in 2,5-elimination of pyruvate from 2-succinyl-5-enolpyruvyl-6-hydroxy-3-cyclohexene-1-carboxylate (SEPHCHC) and the formation of 2-succinyl-6-hydroxy-2,4-cyclohexadiene-1-carboxylate (SHCHC). The protein is 2-succinyl-6-hydroxy-2,4-cyclohexadiene-1-carboxylate synthase of Salmonella paratyphi A (strain ATCC 9150 / SARB42).